The chain runs to 355 residues: Peptide chain release factor 1 (355 aa).

Gln231 is modified (N5-methylglutamine).

This sequence belongs to the prokaryotic/mitochondrial release factor family. Post-translationally, methylated by PrmC. Methylation increases the termination efficiency of RF1.

It localises to the cytoplasm. In terms of biological role, peptide chain release factor 1 directs the termination of translation in response to the peptide chain termination codons UAG and UAA. In Aliarcobacter butzleri (strain RM4018) (Arcobacter butzleri), this protein is Peptide chain release factor 1.